The chain runs to 227 residues: MYSISFQDDISMMPRERLMREGAEKLSNQELLSIFLRTGNKKETVFQVSQRILSSISSLNDLKYLTLQELQTISGIGPIKAVELQAIIELGRRINRAEVLQKEQIMGSQKLARKMQQELGDMRQECLVAIYLNSQNQILHQQTIFMGTVSRSIAEPREILHYALKHLATSIILVHNHPSGSVVPSRNDDEVTQHMKEACEMMGLVLLDHLIVSKSNYYSYREETDMI.

Positions 104-226 (QIMGSQKLAR…YYSYREETDM (123 aa)) constitute an MPN domain. Zn(2+)-binding residues include histidine 175, histidine 177, and aspartate 188. Positions 175–188 (HNHPSGSVVPSRND) match the JAMM motif motif.

The protein belongs to the UPF0758 family.

This chain is UPF0758 protein SSA_1218, found in Streptococcus sanguinis (strain SK36).